We begin with the raw amino-acid sequence, 492 residues long: N-succinylglutamate 5-semialdehyde dehydrogenase (492 aa).

Position 220-225 (G220–G225) interacts with NAD(+). Catalysis depends on residues E243 and C277.

This sequence belongs to the aldehyde dehydrogenase family. AstD subfamily.

The catalysed reaction is N-succinyl-L-glutamate 5-semialdehyde + NAD(+) + H2O = N-succinyl-L-glutamate + NADH + 2 H(+). It participates in amino-acid degradation; L-arginine degradation via AST pathway; L-glutamate and succinate from L-arginine: step 4/5. In terms of biological role, catalyzes the NAD-dependent reduction of succinylglutamate semialdehyde into succinylglutamate. The chain is N-succinylglutamate 5-semialdehyde dehydrogenase from Escherichia coli O6:K15:H31 (strain 536 / UPEC).